Here is a 398-residue protein sequence, read N- to C-terminus: 1-deoxy-D-xylulose 5-phosphate reductoisomerase (398 aa).

5 residues coordinate NADPH: Thr10, Gly11, Ser12, Ile13, and Asn124. Lys125 contacts 1-deoxy-D-xylulose 5-phosphate. Glu126 serves as a coordination point for NADPH. Residue Asp150 coordinates Mn(2+). 1-deoxy-D-xylulose 5-phosphate-binding residues include Ser151, Glu152, Ser186, and His209. Glu152 contacts Mn(2+). Residue Gly215 participates in NADPH binding. 1-deoxy-D-xylulose 5-phosphate is bound by residues Ser222, Asn227, Lys228, and Glu231. A Mn(2+)-binding site is contributed by Glu231.

This sequence belongs to the DXR family. Requires Mg(2+) as cofactor. It depends on Mn(2+) as a cofactor.

The enzyme catalyses 2-C-methyl-D-erythritol 4-phosphate + NADP(+) = 1-deoxy-D-xylulose 5-phosphate + NADPH + H(+). Its pathway is isoprenoid biosynthesis; isopentenyl diphosphate biosynthesis via DXP pathway; isopentenyl diphosphate from 1-deoxy-D-xylulose 5-phosphate: step 1/6. Catalyzes the NADPH-dependent rearrangement and reduction of 1-deoxy-D-xylulose-5-phosphate (DXP) to 2-C-methyl-D-erythritol 4-phosphate (MEP). The polypeptide is 1-deoxy-D-xylulose 5-phosphate reductoisomerase (Tolumonas auensis (strain DSM 9187 / NBRC 110442 / TA 4)).